A 30-amino-acid chain; its full sequence is uncharacterized protein (30 aa).

The chain crosses the membrane as a helical span at residues 9–26 (YRLVIIVLISVYYRYRFF).

The protein localises to the plastid. Its subcellular location is the chloroplast membrane. This is an uncharacterized protein from Marchantia polymorpha (Common liverwort).